A 156-amino-acid polypeptide reads, in one-letter code: Small ribosomal subunit protein bS18c (156 aa).

Residues Met1–Arg54 form a disordered region. Positions Gln13–Arg48 are enriched in basic residues.

The protein belongs to the bacterial ribosomal protein bS18 family. As to quaternary structure, part of the 30S ribosomal subunit.

It localises to the plastid. The protein resides in the chloroplast. The chain is Small ribosomal subunit protein bS18c from Lolium perenne (Perennial ryegrass).